The chain runs to 320 residues: Ferrochelatase (320 aa).

The Fe cation site is built by H194 and E275.

The protein belongs to the ferrochelatase family.

It localises to the cytoplasm. It carries out the reaction heme b + 2 H(+) = protoporphyrin IX + Fe(2+). It functions in the pathway porphyrin-containing compound metabolism; protoheme biosynthesis; protoheme from protoporphyrin-IX: step 1/1. Its function is as follows. Catalyzes the ferrous insertion into protoporphyrin IX. This Stenotrophomonas maltophilia (strain R551-3) protein is Ferrochelatase.